The following is a 253-amino-acid chain: MAHCKTEQDDWLLAHLKYLLFIFNFFFWVGGAAVMAVGIWTLVEKSGYLSILASSTFAASAYILIFVGGLVMTTGFLGFGAIIREQKSCLSTYFCLLLVIFLVELVAGVLAHVYYQRLSDELKWHLNSTLTEHYGQPRAAEITASVDRLQQDFKCCGSNSSADWQHSAYILSQEALGRQVPDSCCKTVVARCGQRAHPSNIYKVEGGCMAKLEQFVADHLLLMGAVGIGVACLQICGMVLTCCLHRRLQQQFY.

3 helical membrane-spanning segments follow: residues leucine 19–isoleucine 39, isoleucine 63–isoleucine 83, and tyrosine 93–valine 113. Asparagine 127 is a glycosylation site (N-linked (GlcNAc...) asparagine). Residues leucine 220 to leucine 240 form a helical membrane-spanning segment.

Belongs to the tetraspanin (TM4SF) family.

It localises to the membrane. In Mus musculus (Mouse), this protein is Tetraspanin-11 (Tspan11).